The following is a 1577-amino-acid chain: MAP kinase-activating death domain protein (1577 aa).

Positions 13–267 (YLVIVGARHP…VPVSGQKRVD (255 aa)) constitute a uDENN domain. The segment covering 106-121 (KEKVEGGAGPRGKEGA) has biased composition (basic and acidic residues). The interval 106 to 166 (KEKVEGGAGP…WGKRRAKAGS (61 aa)) is disordered. The segment covering 123–140 (TSGASEEAATGSSESGST) has biased composition (low complexity). The span at 141 to 156 (LQPPSADSTPDINQSP) shows a compositional bias: polar residues. Phosphoserine is present on Ser-155. In terms of domain architecture, cDENN spans 288-428 (RFTLVDFPLH…ESLELKKHLK (141 aa)). The 135-residue stretch at 430–564 (ALASMSLNTQ…LNPSNYAFQR (135 aa)) folds into the dDENN domain. Disordered stretches follow at residues 604–635 (LSVP…SSYS) and 676–840 (QPQK…NSTE). Residues 614–629 (SDPTEDSGSDSQDYDD) are compositionally biased toward acidic residues. A phosphoserine mark is found at Ser-688 and Ser-691. The span at 688-698 (SENSQENPPLR) shows a compositional bias: polar residues. Low complexity predominate over residues 699–715 (SSSSTTASSSPSTVVHS). Residues 793–803 (PRFSQHVSGSR) show a composition bias toward polar residues. 3 positions are modified to phosphoserine: Ser-812, Ser-817, and Ser-819. A compositionally biased stretch (low complexity) spans 826–839 (RASSPNSTVSNNST). A phosphoserine mark is found at Ser-857, Ser-861, Ser-915, Ser-920, Ser-929, and Ser-1058. 3 disordered regions span residues 912–940 (QKSS…SSEN), 1050–1109 (KEPD…DTRS), and 1127–1272 (EVKK…RSSE). Residues 928–938 (SSPQGRSSNSS) are compositionally biased toward low complexity. Phosphothreonine occurs at positions 1060 and 1065. Position 1109 is a phosphoserine (Ser-1109). The segment covering 1127-1141 (EVKKQKALEKQRPEG) has biased composition (basic and acidic residues). Residues 1157-1172 (QMSADSGVSLTSASQR) show a composition bias toward polar residues. A compositionally biased stretch (low complexity) spans 1189–1203 (SSSQDSEVSTVSNSS). Polar residues predominate over residues 1232-1248 (SRATLSDSEIETNSATS). The residue at position 1235 (Thr-1235) is a Phosphothreonine. 2 positions are modified to phosphoserine: Ser-1237 and Ser-1266. The 76-residue stretch at 1336-1411 (GMDQGPQEMI…GLVYSQQVNE (76 aa)) folds into the Death domain.

The protein belongs to the MADD family. As to quaternary structure, interacts (via death domain) with TNFRSF1A (via death domain). Interacts with PIDD1. Interacts with YWHAZ. Interacts (via death domain) with KIF1B; links the motor KIF1B to Rab3-carrying vesicles in anterograde synaptic vesicle transport. Interacts with KIF1A. Interacts (via uDENN domain) with RAB3A, RAB3B, RAB3C and RAB3D; the GTP-bound form of the Rab proteins is preferred for interaction. In terms of tissue distribution, expressed in the brain.

The protein localises to the cell membrane. The protein resides in the cytoplasm. It is found in the cell projection. It localises to the axon. In terms of biological role, guanyl-nucleotide exchange factor that regulates small GTPases of the Rab family. Converts GDP-bound inactive form of RAB27A and RAB27B to the GTP-bound active forms. Converts GDP-bound inactive form of RAB3A, RAB3C and RAB3D to the GTP-bound active forms, GTPases involved in synaptic vesicle exocytosis and vesicle secretion. Plays a role in synaptic vesicle formation and in vesicle trafficking at the neuromuscular junction. Involved in up-regulating a post-docking step of synaptic exocytosis in central synapses. Probably by binding to the motor proteins KIF1B and KIF1A, mediates motor-dependent transport of GTP-RAB3A-positive vesicles to the presynaptic nerve terminals. Plays a role in TNFA-mediated activation of the MAPK pathway, including ERK1/2. May link TNFRSF1A with MAP kinase activation. May be involved in the regulation of TNFA-induced apoptosis. This chain is MAP kinase-activating death domain protein, found in Mus musculus (Mouse).